A 165-amino-acid polypeptide reads, in one-letter code: Ribosome maturation factor RimM (165 aa).

The region spanning 90-161 is the PRC barrel domain; the sequence is PDTYYVSDLK…KIIIKPVGEW (72 aa).

Belongs to the RimM family. As to quaternary structure, binds ribosomal protein uS19.

It is found in the cytoplasm. An accessory protein needed during the final step in the assembly of 30S ribosomal subunit, possibly for assembly of the head region. Essential for efficient processing of 16S rRNA. May be needed both before and after RbfA during the maturation of 16S rRNA. It has affinity for free ribosomal 30S subunits but not for 70S ribosomes. The sequence is that of Ribosome maturation factor RimM from Clostridium beijerinckii (strain ATCC 51743 / NCIMB 8052) (Clostridium acetobutylicum).